The sequence spans 299 residues: MYFPIVALIGRYQDTGLDAPLTALAQMLTQAGRRVLVEAETARNAGVSGYPVADWDEIGRTATLAVVMGGDGTVLGAARHLAPYGVPLIGINHGRLGFITDIPLQDAHDALGRVLEGNYQAEDRMLLQGGVWRGEQQMYSASAVNDVVLNRAGRGGMIEVRVELDGAFMYTQRADGLIIATPTGSTAYSLSANGPILHPGMNAMVLVPVAPQTLSNRPIVIPDSGVLNMTLTAMGRVEIGASVHFDMQTWSDLQPGDRITVQRAPHTIRFVHPEGYSFFSTLRRKLHWNLMPQATDNLE.

D71 (proton acceptor) is an active-site residue. NAD(+) contacts are provided by residues 71–72 (DG), 145–146 (ND), R173, D175, 186–191 (TAYSLS), A210, and Q248.

This sequence belongs to the NAD kinase family. Requires a divalent metal cation as cofactor.

It localises to the cytoplasm. The catalysed reaction is NAD(+) + ATP = ADP + NADP(+) + H(+). Its function is as follows. Involved in the regulation of the intracellular balance of NAD and NADP, and is a key enzyme in the biosynthesis of NADP. Catalyzes specifically the phosphorylation on 2'-hydroxyl of the adenosine moiety of NAD to yield NADP. The sequence is that of NAD kinase from Bordetella bronchiseptica (strain ATCC BAA-588 / NCTC 13252 / RB50) (Alcaligenes bronchisepticus).